A 286-amino-acid polypeptide reads, in one-letter code: ATP synthase gamma chain (286 aa).

The protein belongs to the ATPase gamma chain family. F-type ATPases have 2 components, CF(1) - the catalytic core - and CF(0) - the membrane proton channel. CF(1) has five subunits: alpha(3), beta(3), gamma(1), delta(1), epsilon(1). CF(0) has three main subunits: a, b and c.

Its subcellular location is the cell membrane. Functionally, produces ATP from ADP in the presence of a proton gradient across the membrane. The gamma chain is believed to be important in regulating ATPase activity and the flow of protons through the CF(0) complex. This is ATP synthase gamma chain from Bacillus mycoides (strain KBAB4) (Bacillus weihenstephanensis).